Reading from the N-terminus, the 464-residue chain is E3 ubiquitin-protein ligase RNF38 (464 aa).

Positions 1-94 (MRESEDSPSP…NSISQDENYH (94 aa)) are disordered. A Bipartite nuclear localization signal 1 motif is present at residues 6 to 20 (DSPSPKRQRLSHSVF). Residues 38–53 (MTSNRQPPSVRPNQHH) are compositionally biased toward polar residues. Residues 64–79 (RNRRSPPVRRQRGRRE) carry the Bipartite nuclear localization signal 2 motif. Residues 64–83 (RNRRSPPVRRQRGRRERLSR) show a composition bias toward basic residues. Residues 412–453 (CVVCMCDFESRQLLRVLPCNHEFHAKCVDKWLKGNRTCPICR) form an RING-type zinc finger.

It localises to the nucleus. The catalysed reaction is S-ubiquitinyl-[E2 ubiquitin-conjugating enzyme]-L-cysteine + [acceptor protein]-L-lysine = [E2 ubiquitin-conjugating enzyme]-L-cysteine + N(6)-ubiquitinyl-[acceptor protein]-L-lysine.. It participates in protein modification; protein ubiquitination. In terms of biological role, acts as an E3 ubiquitin-protein ligase able to ubiquitinate p53/TP53 which promotes its relocalization to discrete foci associated with PML nuclear bodies. Exhibits preference for UBE2D2 as a E2 enzyme. This is E3 ubiquitin-protein ligase RNF38 from Mus musculus (Mouse).